Consider the following 156-residue polypeptide: Small ribosomal subunit protein uS7 (156 aa).

It belongs to the universal ribosomal protein uS7 family. Part of the 30S ribosomal subunit. Contacts proteins S9 and S11.

Functionally, one of the primary rRNA binding proteins, it binds directly to 16S rRNA where it nucleates assembly of the head domain of the 30S subunit. Is located at the subunit interface close to the decoding center, probably blocks exit of the E-site tRNA. This Vibrio atlanticus (strain LGP32) (Vibrio splendidus (strain Mel32)) protein is Small ribosomal subunit protein uS7.